The chain runs to 302 residues: 4-hydroxy-tetrahydrodipicolinate synthase (302 aa).

Thr57 serves as a coordination point for pyruvate. The Proton donor/acceptor role is filled by Tyr145. Catalysis depends on Lys173, which acts as the Schiff-base intermediate with substrate. A pyruvate-binding site is contributed by Ile213.

Belongs to the DapA family. In terms of assembly, homotetramer; dimer of dimers.

It is found in the cytoplasm. It carries out the reaction L-aspartate 4-semialdehyde + pyruvate = (2S,4S)-4-hydroxy-2,3,4,5-tetrahydrodipicolinate + H2O + H(+). The protein operates within amino-acid biosynthesis; L-lysine biosynthesis via DAP pathway; (S)-tetrahydrodipicolinate from L-aspartate: step 3/4. Its function is as follows. Catalyzes the condensation of (S)-aspartate-beta-semialdehyde [(S)-ASA] and pyruvate to 4-hydroxy-tetrahydrodipicolinate (HTPA). In Corynebacterium aurimucosum (strain ATCC 700975 / DSM 44827 / CIP 107346 / CN-1) (Corynebacterium nigricans), this protein is 4-hydroxy-tetrahydrodipicolinate synthase.